A 757-amino-acid polypeptide reads, in one-letter code: MIEAIGNQYVVARPVYSTKAFGEEFKKTYGHHKTFLDHLKGCCSCSSQKAKKIALSLFPIASWLPAYKIKEWLLSDIVSGISTGLVAVLQGLAFALLVNIPPAYGLYAAFFPVITYFFLGTSRHISVGPFPVLSMMVGVVVTRVASGSDTSPALSSSSAENDSMIEEKVMVAASVTVLSGIIQLLLGVLQIGFVVIYLSESLISGFTTAAAIHVLVSQLKFMLQLTVPAHSDPFSIFKVLESVFSQIQKTNIADLVTSVIILVVVFVVKEINQRYRSKLPVPIPIELIMTVIATGISYGCNFEQRFGVAVVGNMSLGFQPPITPSVEVFQDTIGDCFGIAIVGFAVAFSVASVYSLKYDYPIDGNQELIALGVSNIFTGAFKGFAGSTALSRSGVQESTGGKTQVAGLLSAVIVLIVIVAIGFLLQPLQKSVLAALALGNLKGMLMQFAEIGRLWKKDKYDCLIWIMTFIFAIVLGLGLGLAASVAFQLLTIVFRTQFPKCSTLANVGRSNIYKNKKNYADVYEPEGVKIFRCPSPIYFANIGFFKQKLIDAVGFNPLRILRKRNKALKKIRKLQKQGLIQVTPKGFICTSDGFKDSDEELDNNQIEELDQPINTTDLPFEIDWNADLPLNITIPKISLHSLILDFSAVSFLDISSMRGLRTILQEFIRIKVDVYIVGTDDDFIDKLARCEFFDDEVTDSIFFLTIHDAILHIWMKKDYSTSKFNSSQEKERKFDFTINTNGGLRNRECQVPVETKF.

Over 1-71 (MIEAIGNQYV…SWLPAYKIKE (71 aa)) the chain is Cytoplasmic. The helical transmembrane segment at 72 to 92 (WLLSDIVSGISTGLVAVLQGL) threads the bilayer. Position 93 (Ala93) is a topological domain, extracellular. The chain crosses the membrane as a helical span at residues 94–114 (FALLVNIPPAYGLYAAFFPVI). Residues 115 to 124 (TYFFLGTSRH) lie on the Cytoplasmic side of the membrane. A helical membrane pass occupies residues 125-145 (ISVGPFPVLSMMVGVVVTRVA). Residues 146–176 (SGSDTSPALSSSSAENDSMIEEKVMVAASVT) are Extracellular-facing. N-linked (GlcNAc...) asparagine glycosylation is present at Asn161. The helical transmembrane segment at 177-197 (VLSGIIQLLLGVLQIGFVVIY) threads the bilayer. Topologically, residues 198–201 (LSES) are cytoplasmic. The chain crosses the membrane as a helical span at residues 202 to 222 (LISGFTTAAAIHVLVSQLKFM). Residues 223–250 (LQLTVPAHSDPFSIFKVLESVFSQIQKT) lie on the Extracellular side of the membrane. The chain crosses the membrane as a helical span at residues 251 to 271 (NIADLVTSVIILVVVFVVKEI). Over 272–278 (NQRYRSK) the chain is Cytoplasmic. Residues 279-299 (LPVPIPIELIMTVIATGISYG) form a helical membrane-spanning segment. Topologically, residues 300 to 335 (CNFEQRFGVAVVGNMSLGFQPPITPSVEVFQDTIGD) are extracellular. A helical membrane pass occupies residues 336–356 (CFGIAIVGFAVAFSVASVYSL). Over 357–367 (KYDYPIDGNQE) the chain is Cytoplasmic. A helical transmembrane segment spans residues 368–388 (LIALGVSNIFTGAFKGFAGST). Over 389–404 (ALSRSGVQESTGGKTQ) the chain is Extracellular. Residues 405–425 (VAGLLSAVIVLIVIVAIGFLL) form a helical membrane-spanning segment. The Cytoplasmic portion of the chain corresponds to 426–462 (QPLQKSVLAALALGNLKGMLMQFAEIGRLWKKDKYDC). A helical transmembrane segment spans residues 463 to 483 (LIWIMTFIFAIVLGLGLGLAA). At 484–757 (SVAFQLLTIV…ECQVPVETKF (274 aa)) the chain is on the extracellular side. In terms of domain architecture, STAS spans 518–713 (NYADVYEPEG…LTIHDAILHI (196 aa)). The short motif at 754 to 757 (ETKF) is the PDZ-binding element.

The protein belongs to the SLC26A/SulP transporter (TC 2.A.53) family. As to quaternary structure, interacts with PDZK1, CFTR, SLC26A6 and NHERF1. Interacts (via PDZ-binding motif) with NHERF4 (via the third PDZ domain); interaction leads to decreased expression of SLC26A3 on the cell membrane resulting in its reduced exchanger activity. Post-translationally, N-glycosylation is required for efficient cell surface expression, and protection from proteolytic degradation.

The protein resides in the apical cell membrane. The protein localises to the membrane. Its subcellular location is the cell membrane. It carries out the reaction hydrogencarbonate(in) + 2 chloride(out) = hydrogencarbonate(out) + 2 chloride(in). Functionally, mediates chloride-bicarbonate exchange with a chloride bicarbonate stoichiometry of 2:1 in the intestinal epithelia. Plays a role in the chloride and bicarbonate homeostasis during sperm epididymal maturation and capacitation. This chain is Chloride anion exchanger (Slc26a3), found in Rattus norvegicus (Rat).